The following is a 296-amino-acid chain: Ribose import binding protein RbsB (296 aa).

Residues 1-25 (MNMKKLATLVSAVALSATVSANAMA) form the signal peptide.

It belongs to the bacterial solute-binding protein 2 family. The complex is composed of an ATP-binding protein (RbsA), two transmembrane proteins (RbsC) and a solute-binding protein (RbsB).

The protein resides in the periplasm. Its function is as follows. Part of the ABC transporter complex RbsABC involved in ribose import. Binds ribose. This is Ribose import binding protein RbsB (rbsB) from Salmonella typhi.